A 468-amino-acid polypeptide reads, in one-letter code: Ribosomal lysine N-methyltransferase 4 (468 aa).

Residues 22-302 (EKIGLNDYRH…KGEQLWNTYG (281 aa)) form the SET domain. A disordered region spans residues 188–225 (ISNENEKSAAETSIKEDKNGDAAKKNEGSANQDDEKLH). Tyrosine 301 is an S-adenosyl-L-methionine binding site.

The protein belongs to the class V-like SAM-binding methyltransferase superfamily. Histone-lysine methyltransferase family. SETD6 subfamily.

The protein resides in the nucleus. Its function is as follows. S-adenosyl-L-methionine-dependent protein-lysine N-methyltransferase that monomethylates 60S ribosomal protein L42 (rpl42) at 'Lys-55'. The polypeptide is Ribosomal lysine N-methyltransferase 4 (Schizosaccharomyces pombe (strain 972 / ATCC 24843) (Fission yeast)).